The primary structure comprises 127 residues: Protein yippee-like 4 (127 aa).

Residues 27-124 (RTYSCVHCRA…IEMSHMVKDN (98 aa)) form the Yippee domain. The Zn(2+) site is built by C31, C34, C87, and C90. A phosphothreonine mark is found at T92 and T93. Residue Y98 is modified to Phosphotyrosine.

Belongs to the yippee family. Detected in brain, spleen and testis.

It localises to the nucleus. Its subcellular location is the nucleolus. The polypeptide is Protein yippee-like 4 (Ypel4) (Mus musculus (Mouse)).